We begin with the raw amino-acid sequence, 197 residues long: Dephospho-CoA kinase (197 aa).

Residues 2 to 197 (IIGLTGGIGS…HTKYMELLNE (196 aa)) form the DPCK domain. 10–15 (GSGKSA) contacts ATP.

This sequence belongs to the CoaE family.

Its subcellular location is the cytoplasm. The enzyme catalyses 3'-dephospho-CoA + ATP = ADP + CoA + H(+). The protein operates within cofactor biosynthesis; coenzyme A biosynthesis; CoA from (R)-pantothenate: step 5/5. Functionally, catalyzes the phosphorylation of the 3'-hydroxyl group of dephosphocoenzyme A to form coenzyme A. The protein is Dephospho-CoA kinase of Gamma-proteobacterium EBAC31A08.